A 97-amino-acid polypeptide reads, in one-letter code: ORF9b protein (97 aa).

A 9b domain is found at 8–97 (MHPALRLVDP…PDEFVVVTVK (90 aa)). A Nuclear export signal motif is present at residues 45 to 53 (ILRLGSPLS).

Belongs to the coronavirus group 2 protein 9b family. As to quaternary structure, homodimer. Interacts with host TOMM70; the interaction occurs only with monomer.

It is found in the host cytoplasm. Its subcellular location is the host mitochondrion. In terms of biological role, plays a role in inhibiting the host innate immune response by targeting the mitochondrial-associated innate immune response. Acts by binding to host TOMM70, inhibiting its binding to HSP90AB1 thereby disrupting the interferon activation pathway. The chain is ORF9b protein from Homo sapiens (Human).